Consider the following 171-residue polypeptide: Ribosome maturation factor RimM (171 aa).

Residues 96–168 (EDGFYDHELE…TATITPPEGL (73 aa)) form the PRC barrel domain.

The protein belongs to the RimM family. In terms of assembly, binds ribosomal protein uS19.

It localises to the cytoplasm. An accessory protein needed during the final step in the assembly of 30S ribosomal subunit, possibly for assembly of the head region. Essential for efficient processing of 16S rRNA. May be needed both before and after RbfA during the maturation of 16S rRNA. It has affinity for free ribosomal 30S subunits but not for 70S ribosomes. This Corynebacterium glutamicum (strain R) protein is Ribosome maturation factor RimM.